The primary structure comprises 341 residues: tRNA N6-adenosine threonylcarbamoyltransferase (341 aa).

Residues histidine 115 and histidine 119 each contribute to the Fe cation site. Substrate contacts are provided by residues 138-142, aspartate 171, glycine 184, and asparagine 276; that span reads LVSGG. A Fe cation-binding site is contributed by aspartate 304.

Belongs to the KAE1 / TsaD family. Fe(2+) is required as a cofactor.

It is found in the cytoplasm. It catalyses the reaction L-threonylcarbamoyladenylate + adenosine(37) in tRNA = N(6)-L-threonylcarbamoyladenosine(37) in tRNA + AMP + H(+). Functionally, required for the formation of a threonylcarbamoyl group on adenosine at position 37 (t(6)A37) in tRNAs that read codons beginning with adenine. Is involved in the transfer of the threonylcarbamoyl moiety of threonylcarbamoyl-AMP (TC-AMP) to the N6 group of A37, together with TsaE and TsaB. TsaD likely plays a direct catalytic role in this reaction. This is tRNA N6-adenosine threonylcarbamoyltransferase from Stenotrophomonas maltophilia (strain K279a).